The primary structure comprises 206 residues: Venom allergen 5 (206 aa).

4 disulfides stabilise this stretch: Cys4/Cys16, Cys8/Cys104, Cys28/Cys96, and Cys172/Cys189. Positions Glu48–Tyr191 constitute an SCP domain.

It belongs to the CRISP family. Venom allergen 5-like subfamily. In terms of tissue distribution, expressed by the venom gland.

It is found in the secreted. This is Venom allergen 5 from Polistes gallicus (Paper wasp).